Here is a 61-residue protein sequence, read N- to C-terminus: Statherin (61 aa).

A signal peptide spans 1-19 (MXFLXFXLXLLXMXXMXXX). Residues 20 to 25 (DSSEEK) are hydroxyapatite-binding; inhibits crystal growth. Serine 21 and serine 22 each carry phosphoserine. The interval 37–61 (RYGPYQPFAPQPLYPQPYQPYQPQY) is disordered. A hydrophobic; inhibits precipitation of calcium phosphate salts region spans residues 37 to 61 (RYGPYQPFAPQPLYPQPYQPYQPQY). Pro residues predominate over residues 43–61 (PFAPQPLYPQPYQPYQPQY).

This sequence belongs to the histatin/statherin family. As to expression, secreted by parotid and submandibular glands.

It is found in the secreted. Its function is as follows. Salivary protein that stabilizes saliva supersaturated with calcium salts by inhibiting the precipitation of calcium phosphate salts. It also modulates hydroxyapatite crystal formation on the tooth surface. In Macaca fascicularis (Crab-eating macaque), this protein is Statherin (STATH).